Here is a 227-residue protein sequence, read N- to C-terminus: Cytochrome c oxidase subunit 2 (227 aa).

Residues 1 to 14 are Mitochondrial intermembrane-facing; sequence MAYPLQLGLQDATS. Residues 15–45 traverse the membrane as a helical segment; sequence PIMEELMNFHDHTLMIVFLISSLVLYIISLM. The Mitochondrial matrix segment spans residues 46 to 59; the sequence is LTTKLTHTSTMDAQ. The helical transmembrane segment at 60–87 threads the bilayer; that stretch reads EVETIWTILPAVILIMIALPSLRILYMM. Over 88 to 227 the chain is Mitochondrial intermembrane; that stretch reads DEINNPVLTV…HFENWSASMI (140 aa). The Cu cation site is built by His-161, Cys-196, Glu-198, Cys-200, His-204, and Met-207. Residue Glu-198 coordinates Mg(2+).

The protein belongs to the cytochrome c oxidase subunit 2 family. As to quaternary structure, component of the cytochrome c oxidase (complex IV, CIV), a multisubunit enzyme composed of 14 subunits. The complex is composed of a catalytic core of 3 subunits MT-CO1, MT-CO2 and MT-CO3, encoded in the mitochondrial DNA, and 11 supernumerary subunits COX4I, COX5A, COX5B, COX6A, COX6B, COX6C, COX7A, COX7B, COX7C, COX8 and NDUFA4, which are encoded in the nuclear genome. The complex exists as a monomer or a dimer and forms supercomplexes (SCs) in the inner mitochondrial membrane with NADH-ubiquinone oxidoreductase (complex I, CI) and ubiquinol-cytochrome c oxidoreductase (cytochrome b-c1 complex, complex III, CIII), resulting in different assemblies (supercomplex SCI(1)III(2)IV(1) and megacomplex MCI(2)III(2)IV(2)). Found in a complex with TMEM177, COA6, COX18, COX20, SCO1 and SCO2. Interacts with TMEM177 in a COX20-dependent manner. Interacts with COX20. Interacts with COX16. It depends on Cu cation as a cofactor.

It localises to the mitochondrion inner membrane. It catalyses the reaction 4 Fe(II)-[cytochrome c] + O2 + 8 H(+)(in) = 4 Fe(III)-[cytochrome c] + 2 H2O + 4 H(+)(out). Component of the cytochrome c oxidase, the last enzyme in the mitochondrial electron transport chain which drives oxidative phosphorylation. The respiratory chain contains 3 multisubunit complexes succinate dehydrogenase (complex II, CII), ubiquinol-cytochrome c oxidoreductase (cytochrome b-c1 complex, complex III, CIII) and cytochrome c oxidase (complex IV, CIV), that cooperate to transfer electrons derived from NADH and succinate to molecular oxygen, creating an electrochemical gradient over the inner membrane that drives transmembrane transport and the ATP synthase. Cytochrome c oxidase is the component of the respiratory chain that catalyzes the reduction of oxygen to water. Electrons originating from reduced cytochrome c in the intermembrane space (IMS) are transferred via the dinuclear copper A center (CU(A)) of subunit 2 and heme A of subunit 1 to the active site in subunit 1, a binuclear center (BNC) formed by heme A3 and copper B (CU(B)). The BNC reduces molecular oxygen to 2 water molecules using 4 electrons from cytochrome c in the IMS and 4 protons from the mitochondrial matrix. The sequence is that of Cytochrome c oxidase subunit 2 (MT-CO2) from Zelotomys hildegardeae (Hildegarde's broad-headed mouse).